The chain runs to 192 residues: Guanylate kinase (192 aa).

The Guanylate kinase-like domain occupies 7 to 185 (GLIIILSSPS…TLKKIHEIIV (179 aa)). 14–21 (SPSGTGKS) provides a ligand contact to ATP.

This sequence belongs to the guanylate kinase family.

The protein resides in the cytoplasm. The catalysed reaction is GMP + ATP = GDP + ADP. Its function is as follows. Essential for recycling GMP and indirectly, cGMP. This Rickettsia felis (strain ATCC VR-1525 / URRWXCal2) (Rickettsia azadi) protein is Guanylate kinase.